The primary structure comprises 486 residues: Catalase (486 aa).

The interval 1 to 28 is disordered; that stretch reads MENKKLTAANGRPIADNQNSQTAGPRGP. Catalysis depends on residues H54 and N127. Y337 contacts heme.

Belongs to the catalase family. In terms of assembly, homodimer. The cofactor is heme.

The enzyme catalyses 2 H2O2 = O2 + 2 H2O. Its function is as follows. Decomposes hydrogen peroxide into water and oxygen; serves to protect cells from the toxic effects of hydrogen peroxide. May be involved in aerotolerance of B.fragilis. This Bacteroides fragilis (strain YCH46) protein is Catalase (katA).